The sequence spans 622 residues: Pyranose 2-oxidase (622 aa).

Positions 1–28 (MSASSSDPFHSFAKTSFTSKAAKRATAH) are cleaved as a signal peptide. Residues 29 to 37 (SLPPLPGPG) constitute a propeptide that is removed on maturation. His-167 bears the Tele-8alpha-FAD histidine mark. Substrate contacts are provided by Gln-449 and His-451. The Proton acceptor role is filled by His-546. Residue Asn-591 is part of the active site.

Belongs to the GMC oxidoreductase family. Homotetramer. The cofactor is FAD.

It localises to the periplasm. The enzyme catalyses D-glucose + O2 = 2-dehydro-D-glucose + H2O2. Functionally, catalyzes the oxidation of various aldopyranoses and disaccharides on carbon-2 to the corresponding 2-keto sugars concomitant with the reduction of O(2) to H(2)O(2). Plays an important role in lignin degradation of wood rot fungi by supplying the essential cosubstrate H(2)O(2) for the ligninolytic peroxidases, lignin peroxidase and manganese-dependent peroxidase. The preferred substrate is D-glucose which is converted to 2-dehydro-D-glucose, an intermediate of a secondary metabolic pathway leading to the antibiotic cortalcerone. Also acts on D-xylose, together with D-glucose the major sugars derived from wood, on L-sorbose, D-galactose and 1,5-anhydroglucitol, a diagnostic marker of diabetes mellitus. This is Pyranose 2-oxidase (P2OX) from Trametes hirsuta (White-rot fungus).